A 130-amino-acid polypeptide reads, in one-letter code: Small ribosomal subunit protein uS8 (130 aa).

This sequence belongs to the universal ribosomal protein uS8 family. Part of the 30S ribosomal subunit.

Functionally, one of the primary rRNA binding proteins, it binds directly to 16S rRNA central domain where it helps coordinate assembly of the platform of the 30S subunit. This Methanoregula boonei (strain DSM 21154 / JCM 14090 / 6A8) protein is Small ribosomal subunit protein uS8.